A 346-amino-acid chain; its full sequence is Trans-enoyl reductase FFUJ_12240 (346 aa).

40–43 (HDAK) lines the NADP(+) pocket. Position 124–131 (124–131 (LAIATAGL)) interacts with substrate. NADP(+) contacts are provided by residues 157 to 160 (ATAT), 180 to 183 (SPSN), Tyr-198, and 245 to 246 (LE). 266–270 (APSIL) contributes to the substrate binding site. Residue 335–336 (VH) coordinates NADP(+).

It belongs to the zinc-containing alcohol dehydrogenase family.

Its function is as follows. Trans-enoyl reductase; part of the gene cluster that mediates the biosynthesis of fujikurins A-D, secondary metabolites playing a role during rice infection. The polyketide synthase PKS19 acts with the trans-enoyl reductase FFUJ_12240 and the polyketide transferase FFUJ_12241 to produce fujikurins, however, the biosynthesis pathway has not been identified yet. The polypeptide is Trans-enoyl reductase FFUJ_12240 (Gibberella fujikuroi (strain CBS 195.34 / IMI 58289 / NRRL A-6831) (Bakanae and foot rot disease fungus)).